We begin with the raw amino-acid sequence, 121 residues long: SPbeta prophage-derived uncharacterized protein YorW (121 aa).

The chain is SPbeta prophage-derived uncharacterized protein YorW (yorW) from Bacillus subtilis (strain 168).